We begin with the raw amino-acid sequence, 634 residues long: Dachshund homolog 2 (634 aa).

Residues 76 to 162 form a DACHbox-N region; sequence RMVDMHGVKV…LITRKDFETL (87 aa). Disordered stretches follow at residues 171-194, 244-286, and 378-416; these read RKRQ…KRSL, LQGN…SGPQ, and IPES…MDHH. Residues 244–269 are compositionally biased toward polar residues; the sequence is LQGNGSQNGTESEPDDLNSTTGGSES. Over residues 396–412 the composition is skewed to low complexity; sequence SQTSSHPSSSVSSSPSQ. Residues 488–568 are DACHbox-C; that stretch reads SSVETLLTNI…KAKRKLQEAL (81 aa). A coiled-coil region spans residues 494 to 588; it reads LTNIQGLLKV…EQALKQATSG (95 aa).

This sequence belongs to the DACH/dachshund family. In terms of assembly, interacts with SIX6. Interacts with EYA2. Expressed in embryo, and at lower levels in the newborn.

The protein localises to the nucleus. Functionally, transcription factor that is involved in regulation of organogenesis. Seems to be a regulator for SIX1 and SIX6. Seems to act as a corepressor of SIX6 in regulating proliferation by directly repressing cyclin-dependent kinase inhibitors, including the p27Kip1 promoter. Is recruited with SIX6 to the p27Kip1 promoter in embryonal retina. SIX6 corepression also seems to involve NCOR1, TBL1, HDAC1 and HDAC3. May be involved together with PAX3, SIX1, and EYA2 in regulation of myogenesis. In the developing somite, expression of DACH2 and PAX3 is regulated by the overlying ectoderm, and DACH2 and PAX3 positively regulate each other's expression. Probably binds to DNA via its DACHbox-N domain. The sequence is that of Dachshund homolog 2 (Dach2) from Mus musculus (Mouse).